Here is a 763-residue protein sequence, read N- to C-terminus: Serine/threonine-protein kinase PknG (763 aa).

The interval 1-32 is disordered; the sequence is MKREHMDHDTEDVGQAAQRADPPSGTTEGRLQ. A Protein kinase domain is found at 160 to 406; it reads YEVKGCIAHG…SAEEMSAQLM (247 aa). Residues 166 to 174 and Lys190 each bind ATP; that span reads IAHGGLGWV. Asp289 acts as the Proton acceptor in catalysis.

This sequence belongs to the protein kinase superfamily. Ser/Thr protein kinase family. In terms of processing, autophosphorylated.

The enzyme catalyses L-seryl-[protein] + ATP = O-phospho-L-seryl-[protein] + ADP + H(+). The catalysed reaction is L-threonyl-[protein] + ATP = O-phospho-L-threonyl-[protein] + ADP + H(+). This Mycobacterium leprae (strain TN) protein is Serine/threonine-protein kinase PknG (pknG).